A 425-amino-acid polypeptide reads, in one-letter code: Oxalate decarboxylase ARB_02208 (425 aa).

An N-terminal signal peptide occupies residues 1–19; sequence MKFGSALVAAVAAVAGVAA. Residues 73–236 form the Cupin type-1 1 domain; sequence FSLSKTRMFH…FNISTGGTFD (164 aa). 4 residues coordinate Mn(2+): His116, His118, Glu122, and His161. Asn228, Asn247, Asn254, and Asn265 each carry an N-linked (GlcNAc...) asparagine glycan. The Cupin type-1 2 domain maps to 270–414; the sequence is FHIRDAPEIQ…AINVPIDVID (145 aa). Positions 317, 319, 324, and 363 each coordinate Mn(2+). A glycan (N-linked (GlcNAc...) asparagine) is linked at Asn367. The active-site Proton donor is Glu378.

Mn(2+) serves as cofactor.

Its subcellular location is the secreted. It catalyses the reaction oxalate + H(+) = formate + CO2. Converts oxalate to formate and CO(2) in an O(2)-dependent reaction. Can also catalyze minor side reactions: oxalate oxidation to produce H(2)O(2), and oxalate-dependent, H(2)O(2)-independent dye oxidations. This Arthroderma benhamiae (strain ATCC MYA-4681 / CBS 112371) (Trichophyton mentagrophytes) protein is Oxalate decarboxylase ARB_02208.